The following is a 397-amino-acid chain: S-adenosylmethionine synthase (397 aa).

Residue His16 participates in ATP binding. Asp18 contacts Mg(2+). Glu44 provides a ligand contact to K(+). Glu57 and Gln100 together coordinate L-methionine. Residues 100–110 are flexible loop; sequence QSPDIAQGVNE. ATP is bound by residues 175 to 177, 242 to 243, Asp251, 257 to 258, Ala274, and Lys278; these read DAK, RF, and RK. L-methionine is bound at residue Asp251. Position 282 (Lys282) interacts with L-methionine.

It belongs to the AdoMet synthase family. In terms of assembly, homotetramer; dimer of dimers. Requires Mg(2+) as cofactor. It depends on K(+) as a cofactor.

Its subcellular location is the cytoplasm. It carries out the reaction L-methionine + ATP + H2O = S-adenosyl-L-methionine + phosphate + diphosphate. Its pathway is amino-acid biosynthesis; S-adenosyl-L-methionine biosynthesis; S-adenosyl-L-methionine from L-methionine: step 1/1. Its function is as follows. Catalyzes the formation of S-adenosylmethionine (AdoMet) from methionine and ATP. The overall synthetic reaction is composed of two sequential steps, AdoMet formation and the subsequent tripolyphosphate hydrolysis which occurs prior to release of AdoMet from the enzyme. The protein is S-adenosylmethionine synthase of Streptococcus thermophilus (strain ATCC BAA-250 / LMG 18311).